Consider the following 313-residue polypeptide: MTDIMTDTQKDTAAGAVPTRSGFVALIGATNAGKSTLVNRLVGAKVSIVSHKVQTTRAIIRGIAIHGSAQIVFMDTPGIFKPRRRLDRAMVTTAWGGAKDADLIMLLIDSERGIKGDAEAILEGLKEVHQPKVLVLNKVDQVRREDLLKLAAAANDVVAFERTFMISALTGSGCEDVMDYLAETLPEGPWYYPEDQISDLPMRQLAAEITREKLFLRLHQELPYASHVETEKWEERKDGSVRIEQVIYVERDSQKKIALGKGGEAIKAISTAARKEISEILEQPVHLFLFVKVRENWGDDPERFREMGLDFPK.

The region spanning 20 to 187 (RSGFVALIGA…MDYLAETLPE (168 aa)) is the Era-type G domain. The tract at residues 28-35 (GATNAGKS) is G1. 28-35 (GATNAGKS) lines the GTP pocket. Residues 54–58 (QTTRA) form a G2 region. The interval 75–78 (DTPG) is G3. Residues 75 to 79 (DTPGI) and 137 to 140 (NKVD) each bind GTP. Positions 137–140 (NKVD) are G4. The tract at residues 166 to 168 (ISA) is G5. The region spanning 218 to 295 (LHQELPYASH…HLFLFVKVRE (78 aa)) is the KH type-2 domain.

It belongs to the TRAFAC class TrmE-Era-EngA-EngB-Septin-like GTPase superfamily. Era GTPase family. Monomer.

Its subcellular location is the cytoplasm. The protein localises to the cell inner membrane. Its function is as follows. An essential GTPase that binds both GDP and GTP, with rapid nucleotide exchange. Plays a role in 16S rRNA processing and 30S ribosomal subunit biogenesis and possibly also in cell cycle regulation and energy metabolism. This is GTPase Era from Rhizobium meliloti (strain 1021) (Ensifer meliloti).